Consider the following 898-residue polypeptide: DNA mismatch repair protein MutS (898 aa).

646–653 contacts ATP; that stretch reads GPNMGGKS.

The protein belongs to the DNA mismatch repair MutS family.

Functionally, this protein is involved in the repair of mismatches in DNA. It is possible that it carries out the mismatch recognition step. This protein has a weak ATPase activity. This chain is DNA mismatch repair protein MutS, found in Brucella ovis (strain ATCC 25840 / 63/290 / NCTC 10512).